A 167-amino-acid chain; its full sequence is MVKILLLALVFSLAHAQDFAELQGKWYTIVIAADNLEKIEEGGPLRFYFRHIDCYKNCSEMEITFYVITNNQCSKTTVIGYLKGNGTYQTQFEGNNIFQPLYITSDKIFFTNKNMDRAGQETNMIVVAGKGNALTPEENEILVQFAHEKKIPVENILNILATDTCPE.

The N-terminal stretch at 1–16 (MVKILLLALVFSLAHA) is a signal peptide. The residue at position 17 (Gln-17) is a Pyrrolidone carboxylic acid. Intrachain disulfides connect Cys-54-Cys-58 and Cys-73-Cys-165. 2 N-linked (GlcNAc...) asparagine glycosylation sites follow: Asn-57 and Asn-85.

It belongs to the calycin superfamily. Lipocalin family. Expressed in the vagina, uterus, and Bartholin's glands of female hamsters. Secreted in vaginal discharge.

The protein localises to the secreted. Functionally, acts as an aphrodisiac pheromone, reliably eliciting copulatory behavior from male hamster. In Cricetus cricetus (Black-bellied hamster), this protein is Aphrodisin.